The chain runs to 448 residues: Chromosomal replication initiator protein DnaA 1 (448 aa).

Residues 1-76 (MLTSETQNVW…FLPVDMSGEP (76 aa)) are domain I, interacts with DnaA modulators. A domain II region spans residues 76–111 (PAIRFIIAPPQKKIIPPNHFSISSSQKEEQSPNSDV). Residues 112–328 (KLNNNYRFEN…GAINRLSAHC (217 aa)) form a domain III, AAA+ region region. Gly-156, Gly-158, Lys-159, and Thr-160 together coordinate ATP. Positions 329-448 (RLLDLNITEE…IGMVRRNIES (120 aa)) are domain IV, binds dsDNA.

It belongs to the DnaA family. Oligomerizes as a right-handed, spiral filament on DNA at oriC.

The protein localises to the cytoplasm. Its function is as follows. Plays an essential role in the initiation and regulation of chromosomal replication. ATP-DnaA binds to the origin of replication (oriC) to initiate formation of the DNA replication initiation complex once per cell cycle. Binds the DnaA box (a 9 base pair repeat at the origin) and separates the double-stranded (ds)DNA. Forms a right-handed helical filament on oriC DNA; dsDNA binds to the exterior of the filament while single-stranded (ss)DNA is stabiized in the filament's interior. The ATP-DnaA-oriC complex binds and stabilizes one strand of the AT-rich DNA unwinding element (DUE), permitting loading of DNA polymerase. After initiation quickly degrades to an ADP-DnaA complex that is not apt for DNA replication. Binds acidic phospholipids. This Protochlamydia amoebophila (strain UWE25) protein is Chromosomal replication initiator protein DnaA 1.